The chain runs to 158 residues: Glycine/sarcosine/betaine reductase complex component A (158 aa).

The active site involves Sec44. A non-standard amino acid (selenocysteine) is located at residue Sec44.

The protein belongs to the GrdA family. In terms of assembly, monomer. Component of the glycine, sarcosine and betaine reductase complexes, together with components B and C.

It catalyses the reaction acetyl phosphate + [thioredoxin]-disulfide + NH4(+) + H2O = [thioredoxin]-dithiol + glycine + phosphate + H(+). It carries out the reaction acetyl phosphate + methylamine + [thioredoxin]-disulfide + H2O = sarcosine + [thioredoxin]-dithiol + phosphate + H(+). The catalysed reaction is acetyl phosphate + trimethylamine + [thioredoxin]-disulfide + H2O = glycine betaine + [thioredoxin]-dithiol + phosphate + H(+). Its function is as follows. In the first step of glycine, betaine and sarcosine reductases, the substrate is bound to component PB via a Schiff base intermediate. Then the PB-activated substrate is nucleophilically attacked by the selenol anion of component PA to transform it to a carboxymethylated selenoether and the respective amine. By action of component PC, acetyl phosphate is formed, leaving component PA in its oxidized state. Finally component PA becomes reduced by the thioredoxin system to start a new catalytic cycle of reductive deamination. In Alkaliphilus metalliredigens (strain QYMF), this protein is Glycine/sarcosine/betaine reductase complex component A.